The chain runs to 310 residues: Putative S-adenosyl-L-methionine-dependent methyltransferase MAB_4587c (310 aa).

S-adenosyl-L-methionine contacts are provided by residues Asp-126 and 155–156 (DL).

It belongs to the UPF0677 family.

In terms of biological role, exhibits S-adenosyl-L-methionine-dependent methyltransferase activity. The protein is Putative S-adenosyl-L-methionine-dependent methyltransferase MAB_4587c of Mycobacteroides abscessus (strain ATCC 19977 / DSM 44196 / CCUG 20993 / CIP 104536 / JCM 13569 / NCTC 13031 / TMC 1543 / L948) (Mycobacterium abscessus).